A 122-amino-acid polypeptide reads, in one-letter code: Large ribosomal subunit protein uL14 (122 aa).

This sequence belongs to the universal ribosomal protein uL14 family. As to quaternary structure, part of the 50S ribosomal subunit. Forms a cluster with proteins L3 and L19. In the 70S ribosome, L14 and L19 interact and together make contacts with the 16S rRNA in bridges B5 and B8.

Its function is as follows. Binds to 23S rRNA. Forms part of two intersubunit bridges in the 70S ribosome. This is Large ribosomal subunit protein uL14 from Brucella abortus (strain 2308).